We begin with the raw amino-acid sequence, 101 residues long: MTALAEILGCYFPYLILKEGKTHWLWLPAIISLAVFVWLLTLHPAASGRIYAAYGGIYIFTALMWLRFIDQVTLTRWDIWGGTVVLLGAALIILQPQGLLK.

Helical transmembrane passes span 24 to 44, 50 to 70, and 79 to 99; these read WLWL…TLHP, IYAA…RFID, and IWGG…PQGL.

It belongs to the UPF0060 family.

The protein localises to the cell inner membrane. The sequence is that of UPF0060 membrane protein ACIAD1364 from Acinetobacter baylyi (strain ATCC 33305 / BD413 / ADP1).